The sequence spans 460 residues: Cysteine--tRNA ligase (460 aa).

Residue cysteine 28 participates in Zn(2+) binding. Residues 30–40 carry the 'HIGH' region motif; it reads MTVYDYCHLGH. Zn(2+) contacts are provided by cysteine 209, histidine 234, and glutamate 238. Positions 266–270 match the 'KMSKS' region motif; that stretch reads KMSKS. Lysine 269 is a binding site for ATP.

This sequence belongs to the class-I aminoacyl-tRNA synthetase family. Monomer. The cofactor is Zn(2+).

Its subcellular location is the cytoplasm. The enzyme catalyses tRNA(Cys) + L-cysteine + ATP = L-cysteinyl-tRNA(Cys) + AMP + diphosphate. This Pseudomonas syringae pv. tomato (strain ATCC BAA-871 / DC3000) protein is Cysteine--tRNA ligase.